The primary structure comprises 165 residues: Peptide methionine sulfoxide reductase MsrA (165 aa).

Cys-11 is an active-site residue.

Belongs to the MsrA Met sulfoxide reductase family.

The enzyme catalyses L-methionyl-[protein] + [thioredoxin]-disulfide + H2O = L-methionyl-(S)-S-oxide-[protein] + [thioredoxin]-dithiol. It carries out the reaction [thioredoxin]-disulfide + L-methionine + H2O = L-methionine (S)-S-oxide + [thioredoxin]-dithiol. Functionally, has an important function as a repair enzyme for proteins that have been inactivated by oxidation. Catalyzes the reversible oxidation-reduction of methionine sulfoxide in proteins to methionine. The protein is Peptide methionine sulfoxide reductase MsrA of Ureaplasma parvum serovar 3 (strain ATCC 27815 / 27 / NCTC 11736).